The chain runs to 250 residues: 5'-nucleotidase SurE (250 aa).

Positions 8, 9, 40, and 92 each coordinate a divalent metal cation.

It belongs to the SurE nucleotidase family. Requires a divalent metal cation as cofactor.

It is found in the cytoplasm. The enzyme catalyses a ribonucleoside 5'-phosphate + H2O = a ribonucleoside + phosphate. Functionally, nucleotidase that shows phosphatase activity on nucleoside 5'-monophosphates. The sequence is that of 5'-nucleotidase SurE from Dichelobacter nodosus (strain VCS1703A).